We begin with the raw amino-acid sequence, 1065 residues long: Carbamoyl phosphate synthase large chain (1065 aa).

The tract at residues 1–401 (MPLDKTIKKV…ALLKAVTSLE (401 aa)) is carboxyphosphate synthetic domain. Residues R129, R169, G175, G176, Q208, V210, E215, G241, V242, H243, Q284, and E298 each coordinate ATP. Residues 133 to 327 (KNLMEEIDEP…IAKIAAKIAV (195 aa)) form the ATP-grasp 1 domain. The Mg(2+) site is built by Q284, E298, and N300. Residues Q284, E298, and N300 each coordinate Mn(2+). Residues 402 to 548 (GKISGLRLEK…YSSYENEDEN (147 aa)) are oligomerization domain. Residues 549-931 (EVTDDKKIVV…AIYKGFRAAG (383 aa)) are carbamoyl phosphate synthetic domain. The ATP-grasp 2 domain occupies 673–863 (SELLKELNIP…MVKLAVEILT (191 aa)). The ATP site is built by R709, K748, I750, E754, G779, V780, H781, S782, Q822, and E834. Mg(2+) is bound by residues Q822, E834, and N836. Mn(2+)-binding residues include Q822, E834, and N836. An MGS-like domain is found at 932–1065 (IEVPKDGGNL…EYRAMKEYFK (134 aa)). Positions 932 to 1065 (IEVPKDGGNL…EYRAMKEYFK (134 aa)) are allosteric domain.

It belongs to the CarB family. As to quaternary structure, composed of two chains; the small (or glutamine) chain promotes the hydrolysis of glutamine to ammonia, which is used by the large (or ammonia) chain to synthesize carbamoyl phosphate. Tetramer of heterodimers (alpha,beta)4. The cofactor is Mg(2+). Requires Mn(2+) as cofactor.

The enzyme catalyses hydrogencarbonate + L-glutamine + 2 ATP + H2O = carbamoyl phosphate + L-glutamate + 2 ADP + phosphate + 2 H(+). It catalyses the reaction hydrogencarbonate + NH4(+) + 2 ATP = carbamoyl phosphate + 2 ADP + phosphate + 2 H(+). It participates in amino-acid biosynthesis; L-arginine biosynthesis; carbamoyl phosphate from bicarbonate: step 1/1. The protein operates within pyrimidine metabolism; UMP biosynthesis via de novo pathway; (S)-dihydroorotate from bicarbonate: step 1/3. Large subunit of the glutamine-dependent carbamoyl phosphate synthetase (CPSase). CPSase catalyzes the formation of carbamoyl phosphate from the ammonia moiety of glutamine, carbonate, and phosphate donated by ATP, constituting the first step of 2 biosynthetic pathways, one leading to arginine and/or urea and the other to pyrimidine nucleotides. The large subunit (synthetase) binds the substrates ammonia (free or transferred from glutamine from the small subunit), hydrogencarbonate and ATP and carries out an ATP-coupled ligase reaction, activating hydrogencarbonate by forming carboxy phosphate which reacts with ammonia to form carbamoyl phosphate. This Clostridium acetobutylicum (strain ATCC 824 / DSM 792 / JCM 1419 / IAM 19013 / LMG 5710 / NBRC 13948 / NRRL B-527 / VKM B-1787 / 2291 / W) protein is Carbamoyl phosphate synthase large chain.